The following is a 309-amino-acid chain: Protein lifeguard 3 (309 aa).

Disordered stretches follow at residues 1 to 31 (MSNP…QPSV) and 64 to 84 (PMNY…SFRP). Basic and acidic residues predominate over residues 70–84 (DYNEEERAGSDSFRP). Residues Ser79 and Ser81 each carry the phosphoserine modification. The next 7 membrane-spanning stretches (helical) occupy residues 101 to 121 (YCII…FTFV), 132 to 152 (VAVY…LACC), 163 to 183 (IILL…ISSM), 188 to 208 (AVII…IFCF), 221 to 241 (FCVL…VLIF), 244 to 264 (IYWL…LFLA), and 286 to 306 (GALQ…QLVG).

The protein belongs to the BI1 family. LFG subfamily. In terms of tissue distribution, expressed in most tissues except spleen, thymus and testis.

It localises to the membrane. The protein resides in the lysosome membrane. The protein localises to the endosome membrane. Its function is as follows. Negatively regulates aortic matrix metalloproteinase-9 (MMP9) production and may play a protective role in vascular remodeling. This is Protein lifeguard 3 (Tmbim1) from Mus musculus (Mouse).